A 455-amino-acid polypeptide reads, in one-letter code: Probable alpha-galactosidase B (455 aa).

The first 16 residues, 1–16, serve as a signal peptide directing secretion; it reads MIEFLALITLISRANA. Intrachain disulfides connect cysteine 39-cysteine 71 and cysteine 121-cysteine 151. Asparagine 42 carries N-linked (GlcNAc...) asparagine glycosylation. Aspartate 149 (nucleophile) is an active-site residue. N-linked (GlcNAc...) asparagine glycosylation is found at asparagine 177 and asparagine 192. Position 222-226 (222-226) interacts with substrate; the sequence is NWGNA. Aspartate 244 acts as the Proton donor in catalysis. N-linked (GlcNAc...) asparagine glycosylation is present at asparagine 395.

It belongs to the glycosyl hydrolase 27 family.

The protein localises to the secreted. The enzyme catalyses Hydrolysis of terminal, non-reducing alpha-D-galactose residues in alpha-D-galactosides, including galactose oligosaccharides, galactomannans and galactolipids.. In terms of biological role, hydrolyzes a variety of simple alpha-D-galactoside as well as more complex molecules such as oligosaccharides and polysaccharides. The chain is Probable alpha-galactosidase B (aglB) from Emericella nidulans (strain FGSC A4 / ATCC 38163 / CBS 112.46 / NRRL 194 / M139) (Aspergillus nidulans).